Reading from the N-terminus, the 694-residue chain is Two-component response regulator ORR25 (694 aa).

The region spanning 17–132 (RVLAVDDSPV…DIQNIWQHVW (116 aa)) is the Response regulatory domain. A 4-aspartylphosphate modification is found at D68. The region spanning 183-242 (TLKRQRVVWTPELHRDFVIAVHELGVDRAVPRKILRMMKVDYMTRENIASHLQKYRLYLK) is the HTH myb-type domain. A DNA-binding region (H-T-H motif) is located at residues 213–238 (PRKILRMMKVDYMTRENIASHLQKYR). The segment at 326-349 (VGHGGSPGNNPVFQPLQNSSNARK) is disordered. The segment covering 333 to 347 (GNNPVFQPLQNSSNA) has biased composition (polar residues).

This sequence belongs to the ARR family. Type-B subfamily. Two-component system major event consists of a His-to-Asp phosphorelay between a sensor histidine kinase (HK) and a response regulator (RR). In plants, the His-to-Asp phosphorelay involves an additional intermediate named Histidine-containing phosphotransfer protein (HPt). This multistep phosphorelay consists of a His-Asp-His-Asp sequential transfer of a phosphate group between first a His and an Asp of the HK protein, followed by the transfer to a conserved His of the HPt protein and finally the transfer to an Asp in the receiver domain of the RR protein.

It is found in the nucleus. In terms of biological role, transcriptional activator that binds specific DNA sequence. Functions as a response regulator involved in His-to-Asp phosphorelay signal transduction system. Phosphorylation of the Asp residue in the receiver domain activates the ability of the protein to promote the transcription of target genes. May directly activate some type-A response regulators in response to cytokinins. This chain is Two-component response regulator ORR25, found in Oryza sativa subsp. japonica (Rice).